We begin with the raw amino-acid sequence, 124 residues long: Ribonuclease P protein component (124 aa).

This sequence belongs to the RnpA family. As to quaternary structure, consists of a catalytic RNA component (M1 or rnpB) and a protein subunit.

It carries out the reaction Endonucleolytic cleavage of RNA, removing 5'-extranucleotides from tRNA precursor.. RNaseP catalyzes the removal of the 5'-leader sequence from pre-tRNA to produce the mature 5'-terminus. It can also cleave other RNA substrates such as 4.5S RNA. The protein component plays an auxiliary but essential role in vivo by binding to the 5'-leader sequence and broadening the substrate specificity of the ribozyme. The polypeptide is Ribonuclease P protein component (Maridesulfovibrio salexigens (strain ATCC 14822 / DSM 2638 / NCIMB 8403 / VKM B-1763) (Desulfovibrio salexigens)).